Consider the following 131-residue polypeptide: Small ribosomal subunit protein uS8 (131 aa).

This sequence belongs to the universal ribosomal protein uS8 family. In terms of assembly, part of the 30S ribosomal subunit. Contacts proteins S5 and S12.

Functionally, one of the primary rRNA binding proteins, it binds directly to 16S rRNA central domain where it helps coordinate assembly of the platform of the 30S subunit. The sequence is that of Small ribosomal subunit protein uS8 from Mycoplasmopsis agalactiae (strain NCTC 10123 / CIP 59.7 / PG2) (Mycoplasma agalactiae).